We begin with the raw amino-acid sequence, 199 residues long: Large ribosomal subunit protein bL9 (199 aa).

Positions 169–199 are disordered; it reads TGGFTEEYDPNAEPGEIPTELLEGGEEAAEA.

It belongs to the bacterial ribosomal protein bL9 family.

Binds to the 23S rRNA. The chain is Large ribosomal subunit protein bL9 from Novosphingobium aromaticivorans (strain ATCC 700278 / DSM 12444 / CCUG 56034 / CIP 105152 / NBRC 16084 / F199).